The primary structure comprises 1401 residues: Protein dispatched homolog 2 (1401 aa).

2 disordered regions span residues 1 to 91 (MDGD…LAPA) and 113 to 138 (DRAA…GTWK). The chain crosses the membrane as a helical span at residues 170-190 (VAVLMLCLAVIFLCTLAGLLG). N-linked (GlcNAc...) asparagine glycosylation is present at asparagine 239. Residues 241–264 (SSSHNTLRPAPRGSAQESAVRPRR) form a disordered region. Asparagine 349 and asparagine 465 each carry an N-linked (GlcNAc...) asparagine glycan. Residues 471–643 (GMDLGLKQEL…LVWLPASAVL (173 aa)) form the SSD domain. 11 helical membrane-spanning segments follow: residues 484–504 (FLVQ…FGMA), 510–530 (LFLT…AFFL), 542–562 (FVNL…TLIF), 589–609 (FGYL…ASYL), 617–637 (CLAL…LVWL), 704–724 (YIWI…AGVS), 964–984 (PAVV…LGTW), 990–1010 (LFSV…LVLL), 1019–1039 (ALFL…YCIS), 1064–1084 (AVGA…TVLL), and 1088–1108 (LGII…FFFQ). Disordered stretches follow at residues 1169-1192 (ARRR…PSVL), 1229-1337 (PALQ…NGKR), and 1352-1401 (SLPA…GYSS). Polar residues predominate over residues 1175–1184 (SFDTSTATSK). A compositionally biased stretch (low complexity) spans 1259–1270 (PLPASPEAPAHS). Residues 1284 to 1305 (SSASTLEGLSVSDETCLSTSEP) show a composition bias toward polar residues. Low complexity predominate over residues 1352–1362 (SLPASHHSSLS). Arginine 1366 carries the omega-N-methylarginine modification.

It belongs to the dispatched family.

It is found in the membrane. This chain is Protein dispatched homolog 2, found in Homo sapiens (Human).